Consider the following 128-residue polypeptide: Probable 4-amino-4-deoxy-L-arabinose-phosphoundecaprenol flippase subunit ArnF (128 aa).

Topologically, residues 1–2 (MG) are cytoplasmic. A helical transmembrane segment spans residues 3–23 (LIWGLFSVIIASVAQLSLGFA). Over 24 to 35 (ASHLPPMTHLWD) the chain is Periplasmic. Residues 36–56 (FIAALLAFGLDARILLLGLLG) form a helical membrane-spanning segment. Topologically, residues 57 to 76 (YLLSVFCWYKTLHKLALSKA) are cytoplasmic. The chain crosses the membrane as a helical span at residues 77–97 (YALLSMSYVLVWIASMVLPGW). Topologically, residues 98–100 (EGT) are periplasmic. Residues 101–121 (FSLKALLGVACIMSGLMLIFL) traverse the membrane as a helical segment. The Cytoplasmic segment spans residues 122–128 (PMTKQRY).

Belongs to the ArnF family. As to quaternary structure, heterodimer of ArnE and ArnF.

It localises to the cell inner membrane. Its pathway is bacterial outer membrane biogenesis; lipopolysaccharide biosynthesis. Functionally, translocates 4-amino-4-deoxy-L-arabinose-phosphoundecaprenol (alpha-L-Ara4N-phosphoundecaprenol) from the cytoplasmic to the periplasmic side of the inner membrane. The sequence is that of Probable 4-amino-4-deoxy-L-arabinose-phosphoundecaprenol flippase subunit ArnF from Escherichia coli O9:H4 (strain HS).